The primary structure comprises 474 residues: Trehalose-6-phosphate synthase (474 aa).

D-glucose 6-phosphate is bound at residue R10. 22-23 (GG) is a binding site for UDP-alpha-D-glucose. Positions 77 and 131 each coordinate D-glucose 6-phosphate. UDP-alpha-D-glucose is bound by residues R263 and K268. R301 is a D-glucose 6-phosphate binding site. Residues F340 and 366–370 (LVAKE) contribute to the UDP-alpha-D-glucose site.

Belongs to the glycosyltransferase 20 family. In terms of assembly, homotetramer.

It catalyses the reaction D-glucose 6-phosphate + UDP-alpha-D-glucose = alpha,alpha-trehalose 6-phosphate + UDP + H(+). It functions in the pathway glycan biosynthesis; trehalose biosynthesis. Probably involved in the osmoprotection via the biosynthesis of trehalose. Catalyzes the transfer of glucose from UDP-alpha-D-glucose (UDP-Glc) to D-glucose 6-phosphate (Glc-6-P) to form trehalose-6-phosphate. Acts with retention of the anomeric configuration of the UDP-sugar donor. The sequence is that of Trehalose-6-phosphate synthase from Escherichia coli O1:K1 / APEC.